Here is a 246-residue protein sequence, read N- to C-terminus: Receptor-transporting protein 4 (246 aa).

The Cytoplasmic portion of the chain corresponds to 1 to 224 (MVVDFWTWEQ…EKLGPSRDPD (224 aa)). The segment at 48–159 (RAFGWFRCSS…DTANCEACTL (112 aa)) adopts a 3CxxC-type zinc-finger fold. A helical membrane pass occupies residues 225–245 (PLNICVFILLLVFIVVKCFTS).

Belongs to the TMEM7 family. As to quaternary structure, interacts with TASR16. Interacts with OPRD1 and OPRM1; the interaction promotes cell surface localization of the OPDR1-OPRM1 heterodimer. In terms of assembly, (Microbial infection) Interacts with influenza A virus protein NS1; this interaction sequesters NS1 from interacting with RIG-I/DDX58 to restore antiviral signaling. As to expression, expressed in circumvallate papillae and testis.

The protein localises to the membrane. Its subcellular location is the cytoplasm. Functionally, chaperone protein that facilitates the trafficking and functional cell surface expression of some G-protein coupled receptors (GPCRs). Promotes functional expression of the bitter taste receptor TAS2R16. Also promotes functional expression of the opioid receptor heterodimer OPRD1-OPRM1. In addition, acts as a potent IFN-inducible suppressor of pathogens including lyssavirus rabies, influenza A or yellow fever virus. Mechanistically, associates with the viral replicase, binds viral RNA, and thereby suppresses viral genome amplification that replicates at the endoplasmic reticulum. In addition, restores antiviral signaling by interacting with and sequestering influenza A virus protein NS1. The sequence is that of Receptor-transporting protein 4 (RTP4) from Homo sapiens (Human).